A 179-amino-acid polypeptide reads, in one-letter code: Probable F-box protein At3g25550 (179 aa).

The F-box domain maps to Ile19 to Asn55.

This chain is Probable F-box protein At3g25550, found in Arabidopsis thaliana (Mouse-ear cress).